Reading from the N-terminus, the 185-residue chain is TATA-box-binding protein (185 aa).

Repeat copies occupy residues 8 to 84 (IENI…VEML) and 99 to 175 (IQNM…LHEL).

This sequence belongs to the TBP family.

In terms of biological role, general factor that plays a role in the activation of archaeal genes transcribed by RNA polymerase. Binds specifically to the TATA box promoter element which lies close to the position of transcription initiation. The polypeptide is TATA-box-binding protein (Thermococcus sibiricus (strain DSM 12597 / MM 739)).